The sequence spans 368 residues: tRNA-specific 2-thiouridylase MnmA (368 aa).

Residues 11–18 and Met-37 contribute to the ATP site; that span reads GMSGGVDS. Residues 97–99 are interaction with target base in tRNA; the sequence is NPD. Residue Cys-102 is the Nucleophile of the active site. An intrachain disulfide couples Cys-102 to Cys-199. Gly-127 lines the ATP pocket. Positions 149-151 are interaction with tRNA; that stretch reads KDQ. Cys-199 functions as the Cysteine persulfide intermediate in the catalytic mechanism. The segment at 311–312 is interaction with tRNA; that stretch reads RY.

This sequence belongs to the MnmA/TRMU family. As to quaternary structure, interacts with TusE.

It localises to the cytoplasm. The enzyme catalyses S-sulfanyl-L-cysteinyl-[protein] + uridine(34) in tRNA + AH2 + ATP = 2-thiouridine(34) in tRNA + L-cysteinyl-[protein] + A + AMP + diphosphate + H(+). Its function is as follows. Catalyzes the 2-thiolation of uridine at the wobble position (U34) of tRNA(Lys), tRNA(Glu) and tRNA(Gln), leading to the formation of s(2)U34, the first step of tRNA-mnm(5)s(2)U34 synthesis. Sulfur is provided by IscS, via a sulfur-relay system. Binds ATP and its substrate tRNAs. The protein is tRNA-specific 2-thiouridylase MnmA of Escherichia coli O139:H28 (strain E24377A / ETEC).